A 430-amino-acid chain; its full sequence is Endo-beta-1,4-glucanase celB (430 aa).

The signal sequence occupies residues 1–16; sequence MALLLSLSLLATTISA. Residues Asn43 and Asn153 are each glycosylated (N-linked (GlcNAc...) asparagine). Glu216 acts as the Nucleophile in catalysis. Glu221 acts as the Proton donor in catalysis. Asn395 carries an N-linked (GlcNAc...) asparagine glycan.

This sequence belongs to the glycosyl hydrolase 7 (cellulase C) family.

It is found in the secreted. It catalyses the reaction Endohydrolysis of (1-&gt;4)-beta-D-glucosidic linkages in cellulose, lichenin and cereal beta-D-glucans.. Functionally, has endoglucanase activity on substrates containing beta-1,4 glycosidic bonds, like in carboxymethylcellulose (CMC), hydroxyethylcellulose (HEC) and beta-glucan. Involved in the degradation of complex natural cellulosic substrates. The polypeptide is Endo-beta-1,4-glucanase celB (celB) (Emericella nidulans (strain FGSC A4 / ATCC 38163 / CBS 112.46 / NRRL 194 / M139) (Aspergillus nidulans)).